The sequence spans 210 residues: Fibrillarin-like rRNA/tRNA 2'-O-methyltransferase (210 aa).

Residues T72 to T73, E88 to F89, D113 to A114, and D134 to T137 each bind S-adenosyl-L-methionine.

The protein belongs to the methyltransferase superfamily. Fibrillarin family. As to quaternary structure, interacts with nop5. Component of box C/D small ribonucleoprotein (sRNP) particles that contain rpl7ae, FlpA and nop5, plus a guide RNA.

In terms of biological role, involved in pre-rRNA and tRNA processing. Utilizes the methyl donor S-adenosyl-L-methionine to catalyze the site-specific 2'-hydroxyl methylation of ribose moieties in rRNA and tRNA. Site specificity is provided by a guide RNA that base pairs with the substrate. Methylation occurs at a characteristic distance from the sequence involved in base pairing with the guide RNA. The polypeptide is Fibrillarin-like rRNA/tRNA 2'-O-methyltransferase (Halobacterium salinarum (strain ATCC 29341 / DSM 671 / R1)).